Reading from the N-terminus, the 20-residue chain is Cytochrome c oxidase subunit 6A1, mitochondrial (20 aa).

Belongs to the cytochrome c oxidase subunit 6A family. Component of the cytochrome c oxidase (complex IV, CIV), a multisubunit enzyme composed of 14 subunits. The complex is composed of a catalytic core of 3 subunits MT-CO1, MT-CO2 and MT-CO3, encoded in the mitochondrial DNA, and 11 supernumerary subunits COX4I, COX5A, COX5B, COX6A, COX6B, COX6C, COX7A, COX7B, COX7C, COX8 and NDUFA4, which are encoded in the nuclear genome. The complex exists as a monomer or a dimer and forms supercomplexes (SCs) in the inner mitochondrial membrane with NADH-ubiquinone oxidoreductase (complex I, CI) and ubiquinol-cytochrome c oxidoreductase (cytochrome b-c1 complex, complex III, CIII), resulting in different assemblies (supercomplex SCI(1)III(2)IV(1) and megacomplex MCI(2)III(2)IV(2)). In terms of tissue distribution, liver specific isoform.

The protein localises to the mitochondrion inner membrane. It functions in the pathway energy metabolism; oxidative phosphorylation. Component of the cytochrome c oxidase, the last enzyme in the mitochondrial electron transport chain which drives oxidative phosphorylation. The respiratory chain contains 3 multisubunit complexes succinate dehydrogenase (complex II, CII), ubiquinol-cytochrome c oxidoreductase (cytochrome b-c1 complex, complex III, CIII) and cytochrome c oxidase (complex IV, CIV), that cooperate to transfer electrons derived from NADH and succinate to molecular oxygen, creating an electrochemical gradient over the inner membrane that drives transmembrane transport and the ATP synthase. Cytochrome c oxidase is the component of the respiratory chain that catalyzes the reduction of oxygen to water. Electrons originating from reduced cytochrome c in the intermembrane space (IMS) are transferred via the dinuclear copper A center (CU(A)) of subunit 2 and heme A of subunit 1 to the active site in subunit 1, a binuclear center (BNC) formed by heme A3 and copper B (CU(B)). The BNC reduces molecular oxygen to 2 water molecules unsing 4 electrons from cytochrome c in the IMS and 4 protons from the mitochondrial matrix. The polypeptide is Cytochrome c oxidase subunit 6A1, mitochondrial (COX6A1) (Canis lupus familiaris (Dog)).